The chain runs to 270 residues: tRNA pseudouridine synthase A (270 aa).

Residue aspartate 60 is the Nucleophile of the active site. Positions 107 to 111 are RNA binding; it reads FHARF. Tyrosine 118 is a binding site for substrate. The interaction with tRNA stretch occupies residues 168–172; it reads QCQSR.

This sequence belongs to the tRNA pseudouridine synthase TruA family. As to quaternary structure, homodimer.

It carries out the reaction uridine(38/39/40) in tRNA = pseudouridine(38/39/40) in tRNA. Functionally, formation of pseudouridine at positions 38, 39 and 40 in the anticodon stem and loop of transfer RNAs. This is tRNA pseudouridine synthase A from Klebsiella pneumoniae subsp. pneumoniae (strain ATCC 700721 / MGH 78578).